Here is a 271-residue protein sequence, read N- to C-terminus: Ribosomal RNA small subunit methyltransferase A (271 aa).

The S-adenosyl-L-methionine site is built by asparagine 19, leucine 21, glycine 46, glutamate 67, aspartate 92, and asparagine 113.

The protein belongs to the class I-like SAM-binding methyltransferase superfamily. rRNA adenine N(6)-methyltransferase family. RsmA subfamily.

Its subcellular location is the cytoplasm. It catalyses the reaction adenosine(1518)/adenosine(1519) in 16S rRNA + 4 S-adenosyl-L-methionine = N(6)-dimethyladenosine(1518)/N(6)-dimethyladenosine(1519) in 16S rRNA + 4 S-adenosyl-L-homocysteine + 4 H(+). Specifically dimethylates two adjacent adenosines (A1518 and A1519) in the loop of a conserved hairpin near the 3'-end of 16S rRNA in the 30S particle. May play a critical role in biogenesis of 30S subunits. This chain is Ribosomal RNA small subunit methyltransferase A, found in Photobacterium profundum (strain SS9).